The sequence spans 967 residues: Leucine--tRNA ligase (967 aa).

Positions 43 to 53 (PYLSGHLHVGH) match the 'HIGH' region motif. The 'KMSKS' region motif lies at 650-654 (KMSKS). Lys653 serves as a coordination point for ATP.

Belongs to the class-I aminoacyl-tRNA synthetase family.

The protein localises to the cytoplasm. The catalysed reaction is tRNA(Leu) + L-leucine + ATP = L-leucyl-tRNA(Leu) + AMP + diphosphate. The chain is Leucine--tRNA ligase from Pyrococcus horikoshii (strain ATCC 700860 / DSM 12428 / JCM 9974 / NBRC 100139 / OT-3).